A 349-amino-acid polypeptide reads, in one-letter code: Glycine-rich cell wall structural protein (349 aa).

The first 23 residues, 1–23 (MGKVSFGFLGLMLVVVVIGVVEC), serve as a signal peptide directing secretion.

The protein localises to the secreted. It is found in the cell wall. Its function is as follows. Responsible for plasticity of the cell wall. In Arabidopsis thaliana (Mouse-ear cress), this protein is Glycine-rich cell wall structural protein.